The primary structure comprises 166 residues: Mitochondrial translation release factor in rescue (166 aa).

Residues 1 to 35 (MSTVGLFHFPTPLTRICPAPWGLRLWEKLTLLSPG) constitute a mitochondrion transit peptide. Residues 57-121 (ENELEEQFVK…LQEKVDVFYN (65 aa)) form a GGQ domain region. Residues 71-73 (GGQ) carry the GGQ motif. At Gln-73 the chain carries N5-methylglutamine. Residues 122–148 (GENSPVHKEKREAAKKKQERKKRAKET) are disordered. Residues 126–137 (PVHKEKREAAKK) show a composition bias toward basic and acidic residues. Positions 127–160 (VHKEKREAAKKKQERKKRAKETLEKKKLLKELWE) form a coiled coil.

This sequence belongs to the prokaryotic/mitochondrial release factor family. Interacts (via C-terminus) with MTRES1 (via S4 domain). Associates with mitoribosomal S39 large subunit, peptidyl tRNA and nascent chain. Post-translationally, methylation of glutamine in the GGQ triplet by HEMK1. Expressed in all areas of the brain tested.

It is found in the mitochondrion. Part of a mitoribosome-associated quality control pathway that prevents aberrant translation by responding to interruptions during elongation. As heterodimer with MTRES1, ejects the unfinished nascent chain and peptidyl transfer RNA (tRNA), respectively, from stalled ribosomes. Recruitment of mitoribosome biogenesis factors to these quality control intermediates suggests additional roles for MTRES1 and MTRF during mitoribosome rescue. The chain is Mitochondrial translation release factor in rescue from Homo sapiens (Human).